Here is a 432-residue protein sequence, read N- to C-terminus: Transcriptional adapter 3 (432 aa).

The stretch at 40–69 (IEELDTLQLELETLLSSASRRLRVLEAETQ) forms a coiled coil. 2 disordered regions span residues 88 to 127 (KEHELGTPIKHSKPKKQKLDGKGSHASGPGPGRPKSRNMQ) and 275 to 313 (SPVEDSPIPEISGKESGTDGASTSPRSQNKPFSAPHTKS). The segment covering 293–305 (DGASTSPRSQNKP) has biased composition (polar residues). Positions 367–407 (LLRLAKEEMNRQELRQRVRMADNEVMDAFRKIMAARQKKRT) form a coiled coil.

It belongs to the NGG1 family.

It is found in the nucleus. Functionally, functions as a component of the PCAF complex. The PCAF complex is capable of efficiently acetylating histones in a nucleosomal context. The chain is Transcriptional adapter 3 (tada3) from Xenopus tropicalis (Western clawed frog).